A 105-amino-acid chain; its full sequence is Large ribosomal subunit protein P2 (105 aa).

Residues 84–105 (AEAKKEEPEEEADDDMGFGLFD) form a disordered region.

It belongs to the eukaryotic ribosomal protein P1/P2 family. P1 and P2 exist as dimers at the large ribosomal subunit. Phosphorylated.

Its function is as follows. Plays an important role in the elongation step of protein synthesis. The chain is Large ribosomal subunit protein P2 (ARP-1) from Leishmania donovani.